The following is a 157-amino-acid chain: Cytochrome c-type biogenesis protein CcmE (157 aa).

The Cytoplasmic portion of the chain corresponds to Met-1–Arg-7. A helical; Signal-anchor for type II membrane protein transmembrane segment spans residues Leu-8–Ala-28. At Phe-29 to Arg-157 the chain is on the periplasmic side. The heme site is built by His-123 and Tyr-127.

The protein belongs to the CcmE/CycJ family.

It localises to the cell inner membrane. Functionally, heme chaperone required for the biogenesis of c-type cytochromes. Transiently binds heme delivered by CcmC and transfers the heme to apo-cytochromes in a process facilitated by CcmF and CcmH. This is Cytochrome c-type biogenesis protein CcmE from Cupriavidus taiwanensis (strain DSM 17343 / BCRC 17206 / CCUG 44338 / CIP 107171 / LMG 19424 / R1) (Ralstonia taiwanensis (strain LMG 19424)).